Consider the following 339-residue polypeptide: UDP-N-acetylglucosamine--N-acetylmuramyl-(pentapeptide) pyrophosphoryl-undecaprenol N-acetylglucosamine transferase (339 aa).

UDP-N-acetyl-alpha-D-glucosamine-binding positions include 9 to 11 (TGG), Asn-119, Arg-160, Ser-188, and Gln-280.

It belongs to the glycosyltransferase 28 family. MurG subfamily.

Its subcellular location is the cell inner membrane. The catalysed reaction is di-trans,octa-cis-undecaprenyl diphospho-N-acetyl-alpha-D-muramoyl-L-alanyl-D-glutamyl-meso-2,6-diaminopimeloyl-D-alanyl-D-alanine + UDP-N-acetyl-alpha-D-glucosamine = di-trans,octa-cis-undecaprenyl diphospho-[N-acetyl-alpha-D-glucosaminyl-(1-&gt;4)]-N-acetyl-alpha-D-muramoyl-L-alanyl-D-glutamyl-meso-2,6-diaminopimeloyl-D-alanyl-D-alanine + UDP + H(+). It functions in the pathway cell wall biogenesis; peptidoglycan biosynthesis. Its function is as follows. Cell wall formation. Catalyzes the transfer of a GlcNAc subunit on undecaprenyl-pyrophosphoryl-MurNAc-pentapeptide (lipid intermediate I) to form undecaprenyl-pyrophosphoryl-MurNAc-(pentapeptide)GlcNAc (lipid intermediate II). In Thermus thermophilus (strain ATCC BAA-163 / DSM 7039 / HB27), this protein is UDP-N-acetylglucosamine--N-acetylmuramyl-(pentapeptide) pyrophosphoryl-undecaprenol N-acetylglucosamine transferase.